Reading from the N-terminus, the 456-residue chain is tRNA-2-methylthio-N(6)-dimethylallyladenosine synthase (456 aa).

Residues 18 to 134 (KKLFIETYGC…LPDLVASVEA (117 aa)) enclose the MTTase N-terminal domain. Residues Cys27, Cys63, Cys98, Cys172, Cys176, and Cys179 each contribute to the [4Fe-4S] cluster site. Positions 158–390 (CGNHISGFVS…IELQNRLSAE (233 aa)) constitute a Radical SAM core domain. The TRAM domain occupies 393–456 (ARDVGKTFEV…SATLKGEEVF (64 aa)).

It belongs to the methylthiotransferase family. MiaB subfamily. Monomer. Requires [4Fe-4S] cluster as cofactor.

The protein resides in the cytoplasm. It carries out the reaction N(6)-dimethylallyladenosine(37) in tRNA + (sulfur carrier)-SH + AH2 + 2 S-adenosyl-L-methionine = 2-methylsulfanyl-N(6)-dimethylallyladenosine(37) in tRNA + (sulfur carrier)-H + 5'-deoxyadenosine + L-methionine + A + S-adenosyl-L-homocysteine + 2 H(+). Functionally, catalyzes the methylthiolation of N6-(dimethylallyl)adenosine (i(6)A), leading to the formation of 2-methylthio-N6-(dimethylallyl)adenosine (ms(2)i(6)A) at position 37 in tRNAs that read codons beginning with uridine. The sequence is that of tRNA-2-methylthio-N(6)-dimethylallyladenosine synthase from Phocaeicola vulgatus (strain ATCC 8482 / DSM 1447 / JCM 5826 / CCUG 4940 / NBRC 14291 / NCTC 11154) (Bacteroides vulgatus).